A 215-amino-acid polypeptide reads, in one-letter code: Cytochrome b6 (215 aa).

Residues 32–52 (IFYCLGGITLTCFLVQVATGF) traverse the membrane as a helical segment. C35 is a binding site for heme c. Residues H86 and H100 each coordinate heme b. A run of 3 helical transmembrane segments spans residues 90–110 (ASMM…TGGF), 116–136 (LTWV…VTGY), and 186–206 (LHTF…FPMI). Heme b is bound by residues H187 and H202.

The protein belongs to the cytochrome b family. PetB subfamily. The 4 large subunits of the cytochrome b6-f complex are cytochrome b6, subunit IV (17 kDa polypeptide, PetD), cytochrome f and the Rieske protein, while the 4 small subunits are PetG, PetL, PetM and PetN. The complex functions as a dimer. Heme b serves as cofactor. It depends on heme c as a cofactor.

The protein resides in the plastid. The protein localises to the chloroplast thylakoid membrane. In terms of biological role, component of the cytochrome b6-f complex, which mediates electron transfer between photosystem II (PSII) and photosystem I (PSI), cyclic electron flow around PSI, and state transitions. This Populus alba (White poplar) protein is Cytochrome b6.